Here is a 438-residue protein sequence, read N- to C-terminus: Phosphatidylserine decarboxylase proenzyme 1, mitochondrial (438 aa).

The N-terminal 21 residues, 1–21 (MRRFRVWPPSPSPWPLLASRP), are a transit peptide targeting the mitochondrion. At 22 to 48 (CPHSHHHRSPFHASANSGARQGNFILP) the chain is on the mitochondrial matrix side. The chain crosses the membrane as a helical span at residues 49-67 (GATAATLVMFGILHARRMY). Over 68 to 438 (EDQKVVERKE…EAIGRWTSRE (371 aa)) the chain is Mitochondrial intermembrane. Residues aspartate 173, histidine 273, and serine 387 each act as charge relay system; for autoendoproteolytic cleavage activity in the active site. Serine 387 acts as the Schiff-base intermediate with substrate; via pyruvic acid; for decarboxylase activity in catalysis. Position 387 is a pyruvic acid (Ser); by autocatalysis (serine 387).

Belongs to the phosphatidylserine decarboxylase family. PSD-B subfamily. Eukaryotic type I sub-subfamily. In terms of assembly, heterodimer of a large membrane-associated beta subunit and a small pyruvoyl-containing alpha subunit. Pyruvate is required as a cofactor. Is synthesized initially as an inactive proenzyme. Formation of the active enzyme involves a self-maturation process in which the active site pyruvoyl group is generated from an internal serine residue via an autocatalytic post-translational modification. Two non-identical subunits are generated from the proenzyme in this reaction, and the pyruvate is formed at the N-terminus of the alpha chain, which is derived from the carboxyl end of the proenzyme. The autoendoproteolytic cleavage occurs by a canonical serine protease mechanism, in which the side chain hydroxyl group of the serine supplies its oxygen atom to form the C-terminus of the beta chain, while the remainder of the serine residue undergoes an oxidative deamination to produce ammonia and the pyruvoyl prosthetic group on the alpha chain. During this reaction, the Ser that is part of the protease active site of the proenzyme becomes the pyruvoyl prosthetic group, which constitutes an essential element of the active site of the mature decarboxylase.

It is found in the mitochondrion inner membrane. It catalyses the reaction a 1,2-diacyl-sn-glycero-3-phospho-L-serine + H(+) = a 1,2-diacyl-sn-glycero-3-phosphoethanolamine + CO2. It participates in phospholipid metabolism; phosphatidylethanolamine biosynthesis; phosphatidylethanolamine from CDP-diacylglycerol: step 2/2. Functionally, catalyzes the formation of phosphatidylethanolamine (PtdEtn) from phosphatidylserine (PtdSer). Plays a central role in phospholipid metabolism and in the interorganelle trafficking of phosphatidylserine. This Oryza sativa subsp. japonica (Rice) protein is Phosphatidylserine decarboxylase proenzyme 1, mitochondrial (PSD1).